A 311-amino-acid chain; its full sequence is Olfactory receptor 1073 (311 aa).

Residues 1–25 (MKQQNDTQILQFLLLGLSENTELQP) lie on the Extracellular side of the membrane. Residue N5 is glycosylated (N-linked (GlcNAc...) asparagine). A helical membrane pass occupies residues 26 to 46 (LIYWLFFSMYLVTVWGNLIII). Residues 47–57 (LATVLDFRLHT) lie on the Cytoplasmic side of the membrane. Residues 58–78 (AMYFFLCNLSFVDICLISTTI) form a helical membrane-spanning segment. At 79-97 (PKMLANVHLNHKAITYEGC) the chain is on the extracellular side. A disulfide bond links C97 and C179. A helical transmembrane segment spans residues 98 to 118 (IMQIYFFTLFVGLDNFLLAVM). Residues 119-133 (AYDRFVAICHPLRYT) lie on the Cytoplasmic side of the membrane. A helical membrane pass occupies residues 134 to 154 (SIMTPHLCMSLVLVSWIASVL). N155 carries N-linked (GlcNAc...) asparagine glycosylation. Over 155-196 (NSSLQSFLVLQLSFCTEVEIPHFFCELSMLVHLACSDTFLSD) the chain is Extracellular. A helical transmembrane segment spans residues 197 to 217 (MAMNVLAALLGGGCLVGILYS). Residues 218 to 244 (YSKIVSSIQAISSAEGKYKAFSTCVSH) lie on the Cytoplasmic side of the membrane. The helical transmembrane segment at 245–265 (LSVVSLFYCTLLGVYLSSAVT) threads the bilayer. Residues 266–271 (QNSHST) are Extracellular-facing. A helical membrane pass occupies residues 272–292 (AATSLMYTVVTPMLNPFIYSL). Topologically, residues 293–311 (RNDNIKRALKNFVKKKLEK) are cytoplasmic.

Belongs to the G-protein coupled receptor 1 family. Tongue specific.

The protein localises to the cell membrane. Functionally, possible taste receptor. The protein is Olfactory receptor 1073 (Olr1073) of Rattus norvegicus (Rat).